Reading from the N-terminus, the 1172-residue chain is NACHT, LRR and PYD domains-containing protein 1b allele 3 (1172 aa).

The tract at residues 1–22 is disordered; it reads MEESPPKQKSNTKVAQHEGQQD. Residues 126-435 form the NACHT domain; that stretch reads QLVIIEGAAG…EFFAAISCIL (310 aa). 132-139 contributes to the ATP binding site; the sequence is GAAGIGKS. LRR repeat units lie at residues 627–647 and 684–704; these read NLEG…QSLC and SLTE…RMLC. The ZU5 stretch occupies residues 789–922; that stretch reads FWGPTGPVAT…GYTVLKNPSF (134 aa). The FIIND domain maps to 789–1072; sequence FWGPTGPVAT…LRPALPRIAQ (284 aa). A UPA region spans residues 923 to 1072; the sequence is SPMGDVLRII…LRPALPRIAQ (150 aa). Residues 1082–1165 form the CARD domain; it reads HFMDQHREQL…HLVMDLLEKS (84 aa).

Belongs to the NLRP family. In contrast to allele 1 and 2, not able to mediate autocatalytic cleavage. Expressed in macrophages.

The protein localises to the cytoplasm. It is found in the cytosol. Its activity is regulated as follows. In contrast to allele 1, does not undergo autocatalytic cleavage within the FIIND domain and its mode of activation remains unclear. In contrast to alleles 1 and 2, allele 3 is not activated by Val-boroPro (Talabostat, PT-100). Not activated by cleavage by B.anthracis lethal toxin (LT) endopeptidase. Not activated by metabolic inhibitors, such as 2-deoxy-D-glucose and sodium azide. May act as the sensor component of the Nlrp1b inflammasome, which mediates inflammasome activation in response to various pathogen-associated signals, leading to subsequent pyroptosis. Inflammasomes are supramolecular complexes that assemble in the cytosol in response to pathogens and other damage-associated signals and play critical roles in innate immunity and inflammation. May act as a recognition receptor (PRR), which recognizes specific pathogens and other damage-associated signals and forms an inflammasome complex: the inflammasome directly recruits pro-caspase-1 (proCASP1) independently of PYCARD/ASC and promotes caspase-1 (CASP1) activation, which subsequently cleaves and activates inflammatory cytokines IL1B and IL18 and gasdermin-D (GSDMD), leading to pyroptosis. In the absence of GSDMD expression, the Nlrp1b inflammasome is able to recruit and activate CASP8, leading to activation of gasdermin-E (GSDME). Contrary to Nlrp1b allele 1, allele 3 is not activated by Bacillus anthracis lethal toxin. The absence of autocatalytic cleavage within the FIIND domain, which regulates activation in other alleles, suggests that allele 3 may be non-functional. This Mus musculus (Mouse) protein is NACHT, LRR and PYD domains-containing protein 1b allele 3.